The sequence spans 560 residues: Serine/threonine-protein kinase TOS3 (560 aa).

In terms of domain architecture, Protein kinase spans 50-344 (FEILATLGNG…LADIKVHPFM (295 aa)). ATP is bound by residues 56-64 (LGNGQYGKV) and lysine 79. Aspartate 189 functions as the Proton acceptor in the catalytic mechanism.

This sequence belongs to the protein kinase superfamily. Ser/Thr protein kinase family. Post-translationally, autophosphorylated.

The catalysed reaction is L-seryl-[protein] + ATP = O-phospho-L-seryl-[protein] + ADP + H(+). It catalyses the reaction L-threonyl-[protein] + ATP = O-phospho-L-threonyl-[protein] + ADP + H(+). Its function is as follows. One of the three SNF1 protein kinases (with SAK1 and ELM1) which are required for growth on nonfermentable carbon sources and nonpreferred sugars and for response to environmental stress. Activates SNF1 by phosphorylation of its activation-loop 'Thr-210'. Required for the regulation by SNF1 of the transcription of a large set of genes, the modification the activity of metabolic enzymes, and the control of various nutrient-responsive cellular developmental processes. Also phosphorylates GAL83, MIG1 and SIP2. The protein is Serine/threonine-protein kinase TOS3 (TOS3) of Saccharomyces cerevisiae (strain ATCC 204508 / S288c) (Baker's yeast).